Here is a 134-residue protein sequence, read N- to C-terminus: MGLIIDTSIIIALERGKVSTKQWSHYGQAYISPIVLTELLIGVDRVNNENKRIKCLAFIEYVKSLFTILPFGIEEVYTYARIINDLYKQRITIGTHDMLIAATAITHGYSLLTLNVKDFKRIQGLEVLTVSSKD.

Residues 4-123 (IIDTSIIIAL…LNVKDFKRIQ (120 aa)) enclose the PINc domain. Mg(2+)-binding residues include Asp-6 and Asp-97.

It belongs to the PINc/VapC protein family. The cofactor is Mg(2+).

Its function is as follows. Toxic component of a type II toxin-antitoxin (TA) system. Has ssRNase activity. Upon expression in E.coli inhibits growth in liquid culture; this toxic effect is neutralized by coexpression with cognate antitoxin VapB1. Its RNase activity is partially inhibited in vitro by VapB1. This chain is Ribonuclease VapC1, found in Rickettsia felis (strain ATCC VR-1525 / URRWXCal2) (Rickettsia azadi).